The primary structure comprises 258 residues: Imidazole glycerol phosphate synthase subunit HisF (258 aa).

Residues D11 and D130 contribute to the active site.

The protein belongs to the HisA/HisF family. In terms of assembly, heterodimer of HisH and HisF.

It localises to the cytoplasm. The catalysed reaction is 5-[(5-phospho-1-deoxy-D-ribulos-1-ylimino)methylamino]-1-(5-phospho-beta-D-ribosyl)imidazole-4-carboxamide + L-glutamine = D-erythro-1-(imidazol-4-yl)glycerol 3-phosphate + 5-amino-1-(5-phospho-beta-D-ribosyl)imidazole-4-carboxamide + L-glutamate + H(+). Its pathway is amino-acid biosynthesis; L-histidine biosynthesis; L-histidine from 5-phospho-alpha-D-ribose 1-diphosphate: step 5/9. Its function is as follows. IGPS catalyzes the conversion of PRFAR and glutamine to IGP, AICAR and glutamate. The HisF subunit catalyzes the cyclization activity that produces IGP and AICAR from PRFAR using the ammonia provided by the HisH subunit. In Roseiflexus sp. (strain RS-1), this protein is Imidazole glycerol phosphate synthase subunit HisF.